The chain runs to 95 residues: Aspartyl/glutamyl-tRNA(Asn/Gln) amidotransferase subunit C (95 aa).

It belongs to the GatC family. Heterotrimer of A, B and C subunits.

The catalysed reaction is L-glutamyl-tRNA(Gln) + L-glutamine + ATP + H2O = L-glutaminyl-tRNA(Gln) + L-glutamate + ADP + phosphate + H(+). The enzyme catalyses L-aspartyl-tRNA(Asn) + L-glutamine + ATP + H2O = L-asparaginyl-tRNA(Asn) + L-glutamate + ADP + phosphate + 2 H(+). Functionally, allows the formation of correctly charged Asn-tRNA(Asn) or Gln-tRNA(Gln) through the transamidation of misacylated Asp-tRNA(Asn) or Glu-tRNA(Gln) in organisms which lack either or both of asparaginyl-tRNA or glutaminyl-tRNA synthetases. The reaction takes place in the presence of glutamine and ATP through an activated phospho-Asp-tRNA(Asn) or phospho-Glu-tRNA(Gln). This is Aspartyl/glutamyl-tRNA(Asn/Gln) amidotransferase subunit C from Ruegeria sp. (strain TM1040) (Silicibacter sp.).